The primary structure comprises 194 residues: Adenylate kinase (194 aa).

10-15 contacts ATP; the sequence is GAGKGT. Residues 30-59 form an NMP region; that stretch reads STGDMLRAAVAQQSEIGKRAKAVMDAGQLV. AMP is bound by residues Thr31, Arg36, 57–59, 85–88, and Gln92; these read QLV and GYPR. The segment at 126-142 is LID; the sequence is SRVAETIAKGGQVRSDD. ATP is bound at residue Arg127. Residues Arg139 and Arg150 each contribute to the AMP site. Residue Ala178 coordinates ATP.

Belongs to the adenylate kinase family. In terms of assembly, monomer.

The protein localises to the cytoplasm. It carries out the reaction AMP + ATP = 2 ADP. It functions in the pathway purine metabolism; AMP biosynthesis via salvage pathway; AMP from ADP: step 1/1. Functionally, catalyzes the reversible transfer of the terminal phosphate group between ATP and AMP. Plays an important role in cellular energy homeostasis and in adenine nucleotide metabolism. The polypeptide is Adenylate kinase (Brucella abortus (strain S19)).